The sequence spans 117 residues: MNFGLSLIFLVLVLKGVLCEVKLVESGGGLVQPGGSLKLSCAASGFTFSSYTMSWVRQTPEKRLEWVAYISNGGGSTYYPDTVKGRFTISRDNAKNNLYLQMSSLKSEDTAMYYCAR.

Residues 1–19 (MNFGLSLIFLVLVLKGVLC) form the signal peptide. Residues 20–49 (EVKLVESGGGLVQPGGSLKLSCAASGFTFS) form a framework-1 region. Cysteine 41 and cysteine 115 form a disulfide bridge. The interval 50 to 54 (SYTMS) is complementarity-determining-1. Residues 55–68 (WVRQTPEKRLEWVA) are framework-2. Positions 69-85 (YISNGGGSTYYPDTVKG) are complementarity-determining-2. A framework-3 region spans residues 86–117 (RFTISRDNAKNNLYLQMSSLKSEDTAMYYCAR).

The polypeptide is Ig heavy chain V region 5-84 (Mus musculus (Mouse)).